The primary structure comprises 266 residues: Early E1A protein (266 aa).

Residues 39 to 47 (PSLYELYDL) are interaction with RB1 in competition with E2F1. The segment at 75–145 (EGLFLPEPPV…AAAAADRERE (71 aa)) is interaction with UBE2I. The short motif at 98-102 (PQLHP) is the PXLXP motif, interaction with host ZMYND11 element. Residues 107-111 (LLCYE) carry the LXCXE motif, interaction with host RB1 and TMEM173/STING motif. A zinc finger lies at 159–179 (CKSCEHHRNSTGNTDLMCSLC). Positions 195-226 (NEPEPNSTLDGDERPSPPKLGSAVPEGVIKPV) are disordered. The short motif at 255–259 (PVDLS) is the PXDLS motif, CTBP-binding element. The Nuclear localization signal signature appears at 261 to 265 (KRPRC).

The protein belongs to the adenoviridae E1A protein family. Interacts with host UBE2I; this interaction interferes with polySUMOylation. Interacts with host RB1; this interaction induces the aberrant dissociation of RB1-E2F1 complex thereby disrupting the activity of RB1 and activating E2F1-regulated genes. Interacts with host ATF7; the interaction enhances ATF7-mediated viral transactivation activity which requires the zinc binding domains of both proteins. Isoform early E1A 32 kDa protein and isoform early E1A 26 kDa protein interact (via N-terminus) with CUL1 and E3 ubiquitin ligase RBX1; these interactions inhibit RBX1-CUL1-dependent elongation reaction of ubiquitin chains and attenuate ubiquitination of SCF(FBXW7) target proteins. Interacts (via PXLXP motif) with host ZMYND11/BS69 (via MYND-type zinc finger); this interaction inhibits E1A mediated transactivation. Interacts with host EP300; this interaction stimulates the acetylation of RB1 by recruiting EP300 and RB1 into a multimeric-protein complex. Interacts with host CTBP1 and CTBP2; this interaction seems to potentiate viral replication. Interacts with host DCAF7. Interacts with host DYRK1A. Interacts with host KPNA4; this interaction allows E1A import into the host nucleus. Interacts with host EP400; this interaction stabilizes MYC. Interacts with host TBP protein; this interaction probably disrupts the TBP-TATA complex. Interacts (via LXCXE motif) with host TMEM173/STING; this interaction impairs the ability of TMEM173/STING to sense cytosolic DNA and promote the production of type I interferon (IFN-alpha and IFN-beta). Interacts (via C-terminus) with host ZBED1/hDREF (via C-terminus); the interaction is direct.

The protein localises to the host nucleus. In terms of biological role, plays a role in viral genome replication by driving entry of quiescent cells into the cell cycle. Stimulation of progression from G1 to S phase allows the virus to efficiently use the cellular DNA replicating machinery to achieve viral genome replication. E1A protein has both transforming and trans-activating activities. Induces the disassembly of the E2F1 transcription factor from RB1 by direct competition for the same binding site on RB1, with subsequent transcriptional activation of E2F1-regulated S-phase genes and of the E2 region of the adenoviral genome. Release of E2F1 leads to the ARF-mediated inhibition of MDM2 and causes TP53/p53 to accumulate because it is not targeted for degradation by MDM2-mediated ubiquitination anymore. This increase in TP53, in turn, would arrest the cell proliferation and direct its death but this effect is counteracted by the viral protein E1B-55K. Inactivation of the ability of RB1 to arrest the cell cycle is critical for cellular transformation, uncontrolled cellular growth and proliferation induced by viral infection. Interaction with RBX1 and CUL1 inhibits ubiquitination of the proteins targeted by SCF(FBXW7) ubiquitin ligase complex, and may be linked to unregulated host cell proliferation. The tumorigenesis-restraining activity of E1A may be related to the disruption of the host CtBP-CtIP complex through the CtBP binding motif. Interaction with host TMEM173/STING impairs the ability of TMEM173/STING to sense cytosolic DNA and promote the production of type I interferon (IFN-alpha and IFN-beta). Promotes the sumoylation of host ZBED1/hDREF with SUMO1. The chain is Early E1A protein from Homo sapiens (Human).